Here is a 209-residue protein sequence, read N- to C-terminus: Phosphoheptose isomerase (209 aa).

One can recognise an SIS domain in the interval 50-209; the sequence is IAETFRNGGK…ELVESMMGYA (160 aa). Position 65–67 (65–67) interacts with substrate; that stretch reads NGG. Zn(2+) is bound by residues His-74 and Glu-78. Residues Glu-78, 109 to 110, 135 to 137, Ser-140, and Gln-188 each bind substrate; these read ND and STS. Zn(2+)-binding residues include Gln-188 and His-196.

The protein belongs to the SIS family. GmhA subfamily. The cofactor is Zn(2+).

Its subcellular location is the cytoplasm. The enzyme catalyses 2 D-sedoheptulose 7-phosphate = D-glycero-alpha-D-manno-heptose 7-phosphate + D-glycero-beta-D-manno-heptose 7-phosphate. Its pathway is carbohydrate biosynthesis; D-glycero-D-manno-heptose 7-phosphate biosynthesis; D-glycero-alpha-D-manno-heptose 7-phosphate and D-glycero-beta-D-manno-heptose 7-phosphate from sedoheptulose 7-phosphate: step 1/1. Its function is as follows. Catalyzes the isomerization of sedoheptulose 7-phosphate in D-glycero-D-manno-heptose 7-phosphate. This chain is Phosphoheptose isomerase, found in Chlorobaculum parvum (strain DSM 263 / NCIMB 8327) (Chlorobium vibrioforme subsp. thiosulfatophilum).